A 118-amino-acid chain; its full sequence is Ribonuclease P protein component 2 (118 aa).

Belongs to the eukaryotic/archaeal RNase P protein component 2 family. As to quaternary structure, consists of a catalytic RNA component and at least 4-5 protein subunits.

It localises to the cytoplasm. The enzyme catalyses Endonucleolytic cleavage of RNA, removing 5'-extranucleotides from tRNA precursor.. Part of ribonuclease P, a protein complex that generates mature tRNA molecules by cleaving their 5'-ends. This chain is Ribonuclease P protein component 2, found in Pyrococcus abyssi (strain GE5 / Orsay).